We begin with the raw amino-acid sequence, 146 residues long: Hut operon positive regulatory protein (146 aa).

It belongs to the HutP family. Homohexamer.

Its function is as follows. Antiterminator that binds to cis-acting regulatory sequences on the mRNA in the presence of histidine, thereby suppressing transcription termination and activating the hut operon for histidine utilization. The protein is Hut operon positive regulatory protein of Bacillus cereus (strain G9842).